The sequence spans 44 residues: Defensin ARD1 (44 aa).

Cystine bridges form between cysteine 7–cysteine 32, cysteine 18–cysteine 40, and cysteine 22–cysteine 42.

It is found in the secreted. Possesses potent anti-fungal activity. The protein is Defensin ARD1 of Archaeoprepona demophon (One-spotted leafwing butterfly).